A 291-amino-acid polypeptide reads, in one-letter code: Bis(5'-nucleosyl)-tetraphosphatase, symmetrical (291 aa).

Belongs to the Ap4A hydrolase family.

It carries out the reaction P(1),P(4)-bis(5'-adenosyl) tetraphosphate + H2O = 2 ADP + 2 H(+). Its function is as follows. Hydrolyzes diadenosine 5',5'''-P1,P4-tetraphosphate to yield ADP. In Pseudomonas syringae pv. syringae (strain B728a), this protein is Bis(5'-nucleosyl)-tetraphosphatase, symmetrical.